The chain runs to 266 residues: Zinc transporter ZupT (266 aa).

8 helical membrane-spanning segments follow: residues 8–28, 35–55, 70–90, 123–143, 152–172, 185–205, 209–229, and 246–266; these read LALT…ALMV, FLTF…FVEI, HAAG…IWLI, GIFT…AVFF, GVVI…AVAV, FSYS…GYAL, FLSP…MVYI, and IAIS…LMLA. Fe(2+) contacts are provided by Asn-134 and Glu-137. Positions 137 and 162 each coordinate Zn(2+). Residues Asn-163, Glu-166, and Glu-195 each coordinate Fe(2+). Glu-166 contributes to the Zn(2+) binding site.

It belongs to the ZIP transporter (TC 2.A.5) family. ZupT subfamily.

The protein resides in the cell inner membrane. The enzyme catalyses Zn(2+)(in) = Zn(2+)(out). In terms of biological role, mediates zinc uptake. May also transport other divalent cations. The sequence is that of Zinc transporter ZupT from Chlorobium limicola (strain DSM 245 / NBRC 103803 / 6330).